A 274-amino-acid polypeptide reads, in one-letter code: Putative pyruvate, phosphate dikinase regulatory protein 1 (274 aa).

149–156 (GISRTSKT) provides a ligand contact to ADP.

This sequence belongs to the pyruvate, phosphate/water dikinase regulatory protein family. PDRP subfamily.

It catalyses the reaction N(tele)-phospho-L-histidyl/L-threonyl-[pyruvate, phosphate dikinase] + ADP = N(tele)-phospho-L-histidyl/O-phospho-L-threonyl-[pyruvate, phosphate dikinase] + AMP + H(+). The enzyme catalyses N(tele)-phospho-L-histidyl/O-phospho-L-threonyl-[pyruvate, phosphate dikinase] + phosphate + H(+) = N(tele)-phospho-L-histidyl/L-threonyl-[pyruvate, phosphate dikinase] + diphosphate. Its function is as follows. Bifunctional serine/threonine kinase and phosphorylase involved in the regulation of the pyruvate, phosphate dikinase (PPDK) by catalyzing its phosphorylation/dephosphorylation. In Listeria monocytogenes serotype 4b (strain F2365), this protein is Putative pyruvate, phosphate dikinase regulatory protein 1.